We begin with the raw amino-acid sequence, 1195 residues long: ATP-dependent DNA helicase Hel308 (1195 aa).

ATP is bound by residues Q20 and 39 to 46 (IPTASGKT). Residues 26–196 (RGLLDKNKNF…WLNAELIVDD (171 aa)) form the Helicase ATP-binding domain. The DEAH box signature appears at 143–146 (DEIH). Residues 451–584 (FIGYFIGDGY…LQFVLLRFGI (134 aa)) form the DOD-type homing endonuclease domain.

It belongs to the helicase family. Hel308 subfamily. In terms of assembly, monomer. This protein undergoes a protein self splicing that involves a post-translational excision of the intervening region (intein) followed by peptide ligation.

The catalysed reaction is Couples ATP hydrolysis with the unwinding of duplex DNA by translocating in the 3'-5' direction.. It catalyses the reaction ATP + H2O = ADP + phosphate + H(+). In terms of biological role, DNA-dependent ATPase and 3'-5' DNA helicase that may be involved in repair of stalled replication forks. The polypeptide is ATP-dependent DNA helicase Hel308 (Methanocaldococcus jannaschii (strain ATCC 43067 / DSM 2661 / JAL-1 / JCM 10045 / NBRC 100440) (Methanococcus jannaschii)).